The chain runs to 307 residues: Regulating synaptic membrane exocytosis protein 3 (307 aa).

Residues 86 to 120 form a disordered region; it reads STETGIAVEMRSRVTRQGSRESTDGSTNSNSSEGT. The span at 109–119 shows a compositional bias: polar residues; that stretch reads DGSTNSNSSEG. Residues 155 to 273 enclose the C2 domain; it reads PMGDVHIAIM…DLSAVVTGWY (119 aa). Residues serine 294 and serine 297 each carry the phosphoserine modification.

As to quaternary structure, binds PPFIA3. Does not bind RAB3. In terms of tissue distribution, expressed exclusively in brain with significant levels in cortex, cerebellum and olfactory bulb. Detected at lower level in hippocampus.

It is found in the synapse. Regulates synaptic membrane exocytosis. This chain is Regulating synaptic membrane exocytosis protein 3 (Rims3), found in Rattus norvegicus (Rat).